Consider the following 223-residue polypeptide: Deoxyribose-phosphate aldolase (223 aa).

D92 serves as the catalytic Proton donor/acceptor. K158 serves as the catalytic Schiff-base intermediate with acetaldehyde. K188 serves as the catalytic Proton donor/acceptor.

The protein belongs to the DeoC/FbaB aldolase family. DeoC type 1 subfamily.

It is found in the cytoplasm. The enzyme catalyses 2-deoxy-D-ribose 5-phosphate = D-glyceraldehyde 3-phosphate + acetaldehyde. Its pathway is carbohydrate degradation; 2-deoxy-D-ribose 1-phosphate degradation; D-glyceraldehyde 3-phosphate and acetaldehyde from 2-deoxy-alpha-D-ribose 1-phosphate: step 2/2. Catalyzes a reversible aldol reaction between acetaldehyde and D-glyceraldehyde 3-phosphate to generate 2-deoxy-D-ribose 5-phosphate. The protein is Deoxyribose-phosphate aldolase of Mycolicibacterium paratuberculosis (strain ATCC BAA-968 / K-10) (Mycobacterium paratuberculosis).